Reading from the N-terminus, the 182-residue chain is MKNRLLFLGPPGAGKGTQASLICKDQGFLHLSTGDLLREEVSGGTDLGKKAELIMNKGELVSDEIVISIVEKRLIKYSEGWLLDGFPRNLAQASLLQNLLGRISQPIEIVLLIEIDDEILTERMLGRGRKDDNKAVIKNRLKIYKDQTSPLVDHYKKQGILKSINGCGSVEDVNSRIKEALS.

ATP is bound at residue 12-17 (GAGKGT). The segment at 32-61 (STGDLLREEVSGGTDLGKKAELIMNKGELV) is NMP. AMP is bound by residues threonine 33, arginine 38, 59 to 61 (ELV), 85 to 88 (GFPR), and glutamine 92. An LID region spans residues 126–132 (GRGRKDD). Arginine 127 is an ATP binding site. Residues arginine 129 and arginine 140 each contribute to the AMP site. Glycine 168 lines the ATP pocket.

This sequence belongs to the adenylate kinase family. In terms of assembly, monomer.

It is found in the cytoplasm. The catalysed reaction is AMP + ATP = 2 ADP. It participates in purine metabolism; AMP biosynthesis via salvage pathway; AMP from ADP: step 1/1. Its function is as follows. Catalyzes the reversible transfer of the terminal phosphate group between ATP and AMP. Plays an important role in cellular energy homeostasis and in adenine nucleotide metabolism. The sequence is that of Adenylate kinase from Prochlorococcus marinus (strain SARG / CCMP1375 / SS120).